A 635-amino-acid polypeptide reads, in one-letter code: Extracellular metalloproteinase 1 (635 aa).

The N-terminal stretch at 1-19 is a signal peptide; the sequence is MHGLLLAAGLLSLPLHVLA. A propeptide spanning residues 20-246 is cleaved from the precursor; that stretch reads HPQPSTSTSL…VHNVVDYVAH (227 aa). Asn-287 carries N-linked (GlcNAc...) asparagine glycosylation. His-430 lines the Zn(2+) pocket. Glu-431 is a catalytic residue. His-434 lines the Zn(2+) pocket. 3 N-linked (GlcNAc...) asparagine glycosylation sites follow: Asn-475, Asn-594, and Asn-623.

It belongs to the peptidase M36 family. Requires Zn(2+) as cofactor.

It localises to the secreted. Secreted metalloproteinase probably acting as a virulence factor. This chain is Extracellular metalloproteinase 1 (MEP1), found in Trichophyton rubrum (Athlete's foot fungus).